The following is a 100-amino-acid chain: NAD(P)H-quinone oxidoreductase subunit 4L, chloroplastic (100 aa).

3 consecutive transmembrane segments (helical) span residues 1-21 (MLEN…YGLT), 30-50 (LMCL…FSSF), and 60-80 (VFAI…LAII).

The protein belongs to the complex I subunit 4L family. In terms of assembly, NDH is composed of at least 16 different subunits, 5 of which are encoded in the nucleus.

It is found in the plastid. The protein localises to the chloroplast thylakoid membrane. The catalysed reaction is a plastoquinone + NADH + (n+1) H(+)(in) = a plastoquinol + NAD(+) + n H(+)(out). It carries out the reaction a plastoquinone + NADPH + (n+1) H(+)(in) = a plastoquinol + NADP(+) + n H(+)(out). In terms of biological role, NDH shuttles electrons from NAD(P)H:plastoquinone, via FMN and iron-sulfur (Fe-S) centers, to quinones in the photosynthetic chain and possibly in a chloroplast respiratory chain. The immediate electron acceptor for the enzyme in this species is believed to be plastoquinone. Couples the redox reaction to proton translocation, and thus conserves the redox energy in a proton gradient. The polypeptide is NAD(P)H-quinone oxidoreductase subunit 4L, chloroplastic (Staurastrum punctulatum (Green alga)).